The primary structure comprises 297 residues: Release factor glutamine methyltransferase (297 aa).

S-adenosyl-L-methionine is bound by residues 134 to 138 (GTGSG), aspartate 157, and asparagine 200. 200-203 (NPPY) contacts substrate.

This sequence belongs to the protein N5-glutamine methyltransferase family. PrmC subfamily.

It catalyses the reaction L-glutaminyl-[peptide chain release factor] + S-adenosyl-L-methionine = N(5)-methyl-L-glutaminyl-[peptide chain release factor] + S-adenosyl-L-homocysteine + H(+). In terms of biological role, methylates the class 1 translation termination release factors RF1/PrfA and RF2/PrfB on the glutamine residue of the universally conserved GGQ motif. In Bradyrhizobium diazoefficiens (strain JCM 10833 / BCRC 13528 / IAM 13628 / NBRC 14792 / USDA 110), this protein is Release factor glutamine methyltransferase.